A 1960-amino-acid polypeptide reads, in one-letter code: Myosin-9 (1960 aa).

Position 2 is an N-acetylalanine (A2). The mediates interaction with LIMCH1 stretch occupies residues 2-838 (AQQAADKYLY…RLFTKVKPLL (837 aa)). The residue at position 8 (K8) is an N6-acetyllysine. Y11 is modified (phosphotyrosine). The region spanning 27–77 (AAKKLVWVPSDKSGFEPASLKEEVGEEAIVELVENGKKVKVNKDDIQKMNP) is the Myosin N-terminal SH3-like domain. The Myosin motor domain maps to 81–776 (SKVEDMAELT…VLAHLEEERD (696 aa)). K102 carries the post-translational modification N6-acetyllysine. Residue 174 to 181 (GESGAGKT) participates in ATP binding. 3 positions are modified to N6-acetyllysine: K299, K435, and K613. S628 is modified (phosphoserine). The tract at residues 654-676 (LAKLMATLRNTNPNFVRCIIPNH) is actin-binding. The residue at position 754 (Y754) is a Phosphotyrosine. The 30-residue stretch at 779 to 808 (ITDVIIGFQACCRGYLARKAFAKRQQQLTA) folds into the IQ domain. Residues 837 to 1926 (LLQVSRQEEE…LKNKLRRGDL (1090 aa)) adopt a coiled-coil conformation. Position 850 is an N6-succinyllysine (K850). 3 positions are modified to N6-acetyllysine: K860, K975, and K1024. S1114 is modified (phosphoserine). Residues 1117–1137 (QEDLESERASRNKAEKQKRDL) are disordered. Residues 1122-1137 (SERASRNKAEKQKRDL) show a composition bias toward basic and acidic residues. N6-acetyllysine is present on residues K1234, K1249, K1357, K1392, K1404, K1410, K1459, and K1638. K1669 is modified (N6-succinyllysine). S1714 is subject to Phosphoserine. Residues K1793, K1802, and K1845 each carry the N6-acetyllysine modification. The interval 1877 to 1918 (RQLEEAEEEAQRANASRRKLQRELEDATETADAMNREVSSLK) is disordered. R1923 is modified (omega-N-methylarginine). The tract at residues 1934 to 1960 (VARKGAGDCSDEEVDGKADGAEAKAAE) is disordered. At S1943 the chain carries Phosphoserine. Residues 1948–1960 (DGKADGAEAKAAE) are compositionally biased toward basic and acidic residues.

This sequence belongs to the TRAFAC class myosin-kinesin ATPase superfamily. Myosin family. Myosin is a hexameric protein that consists of 2 heavy chain subunits (MHC), 2 alkali light chain subunits (MLC) and 2 regulatory light chain subunits (MLC-2). Interacts with RASIP1. Interacts with DDR1. Interacts with PDLIM2. Interacts with SVIL. Interacts with HTRA3. Interacts with Myo7a. Interacts with CFAP95. Interacts with LIMCH1; independently of the integration of MYH9 into the myosin complex. Interacts with RAB3A. Interacts with ZBED4. Interacts with S100A4; this interaction increases cell motility. Post-translationally, ISGylated. In terms of processing, ubiquitination.

The protein resides in the cytoplasm. It localises to the cytoskeleton. The protein localises to the cell cortex. Its subcellular location is the cytoplasmic vesicle. It is found in the secretory vesicle. The protein resides in the cortical granule. Functionally, cellular myosin that appears to play a role in cytokinesis, cell shape, and specialized functions such as secretion and capping. Required for cortical actin clearance prior to oocyte exocytosis. Promotes cell motility in conjunction with S100A4. During cell spreading, plays an important role in cytoskeleton reorganization, focal contact formation (in the margins but not the central part of spreading cells), and lamellipodial retraction; this function is mechanically antagonized by MYH10. The chain is Myosin-9 (MYH9) from Canis lupus familiaris (Dog).